The chain runs to 346 residues: Fructose-1,6-bisphosphatase class 1 (346 aa).

4 residues coordinate Mg(2+): E96, D119, L121, and D122. Substrate-binding positions include 122–125 (DGSS), N214, Y247, and K277. Residue E283 coordinates Mg(2+).

The protein belongs to the FBPase class 1 family. Homotetramer. Mg(2+) serves as cofactor.

The protein localises to the cytoplasm. It catalyses the reaction beta-D-fructose 1,6-bisphosphate + H2O = beta-D-fructose 6-phosphate + phosphate. The protein operates within carbohydrate biosynthesis; gluconeogenesis. This is Fructose-1,6-bisphosphatase class 1 from Cytophaga hutchinsonii (strain ATCC 33406 / DSM 1761 / CIP 103989 / NBRC 15051 / NCIMB 9469 / D465).